The chain runs to 218 residues: MVTVKLYGMAYSTCTKRVYTTAKEIGVDVKIVPVDLMKGEHKEPAYLDNYHPFGVIPVLEDEDGTKIYESRAISRYLVAKYGKGSSLLPSPSDPKAYGLFEQAASVEYSSFDPPASSLAYERVFAGMRGLKTNEELAKKYVDTLNAKMDGYERILSKQKYLAGNDFTLADLFHLPYGAMVAQLEPTVLDSKPHVKAWWAASLRVIPGRLLRNSSKEFM.

Residues 2 to 85 (VTVKLYGMAY…YLVAKYGKGS (84 aa)) form the GST N-terminal domain. Residues 12–13 (ST), 41–42 (HK), 55–56 (VI), and 69–70 (ES) each bind glutathione. A GST C-terminal domain is found at 93–218 (DPKAYGLFEQ…LLRNSSKEFM (126 aa)).

The protein belongs to the GST superfamily. Phi family. In terms of tissue distribution, expressed in vegetative rosettes.

The protein resides in the cytoplasm. The protein localises to the cytosol. The catalysed reaction is RX + glutathione = an S-substituted glutathione + a halide anion + H(+). In terms of biological role, specifically catalyzes the conjugation of synthetic 1-chloro-2,4-ditrobenzene to GSH. Also functions as a glutathione peroxidase, converting linoleate oxidation products into their corresponding hydroxyacids. This enzyme may thus serve to protect the cell from oxygen toxicity as well as from exogenous toxins such as herbicides. The chain is Glutathione S-transferase PM239X14 from Arabidopsis thaliana (Mouse-ear cress).